The following is an 843-amino-acid chain: Protein translocase subunit SecA 1 (843 aa).

ATP contacts are provided by residues glutamine 91, 109-113 (GEGKT), and aspartate 498. Positions 799–813 (EAKHVSAEDGKEKVK) are enriched in basic and acidic residues. The disordered stretch occupies residues 799–826 (EAKHVSAEDGKEKVKPKPIVKGDQVGRN). The Zn(2+) site is built by cysteine 829, cysteine 831, cysteine 840, and histidine 841.

The protein belongs to the SecA family. As to quaternary structure, monomer and homodimer. Part of the essential Sec protein translocation apparatus which comprises SecA, SecYEG and auxiliary proteins SecDF. Other proteins may also be involved. Zn(2+) is required as a cofactor.

It is found in the cell membrane. It localises to the cytoplasm. It catalyses the reaction ATP + H2O + cellular proteinSide 1 = ADP + phosphate + cellular proteinSide 2.. Functionally, part of the Sec protein translocase complex. Interacts with the SecYEG preprotein conducting channel. Has a central role in coupling the hydrolysis of ATP to the transfer of proteins into and across the cell membrane, serving as an ATP-driven molecular motor driving the stepwise translocation of polypeptide chains across the membrane. The protein is Protein translocase subunit SecA 1 of Staphylococcus aureus (strain N315).